The following is an 86-amino-acid chain: Exodeoxyribonuclease 7 small subunit (86 aa).

The segment at Ser-64 to Thr-86 is disordered.

This sequence belongs to the XseB family. As to quaternary structure, heterooligomer composed of large and small subunits.

The protein localises to the cytoplasm. The enzyme catalyses Exonucleolytic cleavage in either 5'- to 3'- or 3'- to 5'-direction to yield nucleoside 5'-phosphates.. Functionally, bidirectionally degrades single-stranded DNA into large acid-insoluble oligonucleotides, which are then degraded further into small acid-soluble oligonucleotides. This is Exodeoxyribonuclease 7 small subunit from Akkermansia muciniphila (strain ATCC BAA-835 / DSM 22959 / JCM 33894 / BCRC 81048 / CCUG 64013 / CIP 107961 / Muc).